The chain runs to 297 residues: uncharacterized protein (297 aa).

The segment at 136–174 (FSETNDDSTDEEIDTPINDDDDDDKNNDADNNDINEDNK) is disordered. The span at 139–170 (TNDDSTDEEIDTPINDDDDDDKNNDADNNDIN) shows a compositional bias: acidic residues.

The protein to S.pombe SpBC725.03.

This is an uncharacterized protein from Saccharomyces cerevisiae (strain ATCC 204508 / S288c) (Baker's yeast).